The sequence spans 401 residues: Flagellin D (401 aa).

The protein belongs to the bacterial flagellin family.

The protein localises to the secreted. It localises to the bacterial flagellum. Flagellin is the subunit protein which polymerizes to form the filaments of bacterial flagella. The chain is Flagellin D (flaD) from Rhizobium meliloti (strain 1021) (Ensifer meliloti).